Reading from the N-terminus, the 600-residue chain is Probable methyltransferase PMT7 (600 aa).

Residues 1 to 15 (MGGGYVLFGSARSGQ) lie on the Cytoplasmic side of the membrane. A helical; Signal-anchor for type II membrane protein transmembrane segment spans residues 16 to 36 (MIMVALVLMVGSFYAGSIFGN). Topologically, residues 37–600 (NSPIYISQPS…FCRKKFWAIL (564 aa)) are lumenal. 9 N-linked (GlcNAc...) asparagine glycosylation sites follow: Asn49, Asn98, Asn110, Asn157, Asn200, Asn204, Asn334, Asn447, and Asn484.

It belongs to the methyltransferase superfamily.

It is found in the golgi apparatus membrane. The sequence is that of Probable methyltransferase PMT7 from Arabidopsis thaliana (Mouse-ear cress).